The chain runs to 60 residues: Potassium channel toxin alpha-KTx 3.16 (60 aa).

The signal sequence occupies residues 1–23 (MKVFSAVLIILFVCSMIIGISEG). Intrachain disulfides connect C30/C50, C36/C55, and C40/C57.

This sequence belongs to the short scorpion toxin superfamily. Potassium channel inhibitor family. Alpha-KTx 03 subfamily. Expressed by the venom gland.

The protein resides in the secreted. Functionally, potassium channel inhibitor. This is Potassium channel toxin alpha-KTx 3.16 from Mesobuthus gibbosus (Mediterranean checkered scorpion).